The chain runs to 560 residues: Secreted RxLR effector protein 142 (560 aa).

An N-terminal signal peptide occupies residues M1–G22. Disordered stretches follow at residues Q48–P73 and I354–Q377. Residues E54–T72 are compositionally biased toward basic and acidic residues. Positions R56–R71 match the RxLR-dEER motif. Polar residues predominate over residues G361–Q377.

Belongs to the RxLR effector family.

The protein localises to the secreted. Its subcellular location is the host nucleus. In terms of biological role, secreted effector that completely suppresses the host cell death induced by cell death-inducing proteins. In Plasmopara viticola (Downy mildew of grapevine), this protein is Secreted RxLR effector protein 142.